The sequence spans 443 residues: Probable D-serine dehydratase (443 aa).

Lys-118 is modified (N6-(pyridoxal phosphate)lysine).

It belongs to the serine/threonine dehydratase family. DsdA subfamily. Pyridoxal 5'-phosphate serves as cofactor.

It catalyses the reaction D-serine = pyruvate + NH4(+). The sequence is that of Probable D-serine dehydratase from Vibrio parahaemolyticus serotype O3:K6 (strain RIMD 2210633).